The primary structure comprises 310 residues: Ribosomal RNA small subunit methyltransferase H (310 aa).

S-adenosyl-L-methionine is bound by residues 32–34, D52, F79, D100, and Q107; that span reads GGH.

This sequence belongs to the methyltransferase superfamily. RsmH family.

The protein localises to the cytoplasm. It catalyses the reaction cytidine(1402) in 16S rRNA + S-adenosyl-L-methionine = N(4)-methylcytidine(1402) in 16S rRNA + S-adenosyl-L-homocysteine + H(+). In terms of biological role, specifically methylates the N4 position of cytidine in position 1402 (C1402) of 16S rRNA. The protein is Ribosomal RNA small subunit methyltransferase H of Bacillus cereus (strain ATCC 10987 / NRS 248).